We begin with the raw amino-acid sequence, 343 residues long: L-threonine 3-dehydrogenase (343 aa).

Residue cysteine 38 coordinates Zn(2+). Active-site charge relay system residues include threonine 40 and histidine 43. Zn(2+)-binding residues include histidine 63, glutamate 64, cysteine 93, cysteine 96, cysteine 99, and cysteine 107. NAD(+)-binding positions include isoleucine 175, aspartate 195, arginine 200, 262 to 264 (LGI), and 286 to 287 (IY).

This sequence belongs to the zinc-containing alcohol dehydrogenase family. In terms of assembly, homotetramer. Requires Zn(2+) as cofactor.

It localises to the cytoplasm. It carries out the reaction L-threonine + NAD(+) = (2S)-2-amino-3-oxobutanoate + NADH + H(+). It functions in the pathway amino-acid degradation; L-threonine degradation via oxydo-reductase pathway; glycine from L-threonine: step 1/2. Catalyzes the NAD(+)-dependent oxidation of L-threonine to 2-amino-3-ketobutyrate. The chain is L-threonine 3-dehydrogenase from Paraburkholderia phytofirmans (strain DSM 17436 / LMG 22146 / PsJN) (Burkholderia phytofirmans).